A 358-amino-acid polypeptide reads, in one-letter code: Transcription factor PCF6 (358 aa).

A disordered region spans residues 1-29; it reads MEAAVGDGEGGGGGGGRGKRGRGGGGGEM. Positions 7–16 are enriched in gly residues; it reads DGEGGGGGGG. The 59-residue stretch at 52 to 110 folds into the TCP domain; it reads GKDRHSKVYTAKGIRDRRVRLSVATAIQFYDLQDRLGFDQPSKAIEWLINAASPAIDTL. Disordered regions lie at residues 127-163 and 282-308; these read ADAA…DKEV and ANRG…QQLQ. Composition is skewed to polar residues over residues 143-156 and 285-296; these read LSNK…SETS and GTLQSNSPSNMS.

Forms homodimers and heterodimers.

It is found in the nucleus. Transcription activator. Binds the promoter core sequence 5'-GGNCC-3'. The polypeptide is Transcription factor PCF6 (PCF6) (Oryza sativa subsp. indica (Rice)).